Consider the following 285-residue polypeptide: Involucrin (285 aa).

3 disordered regions span residues 1 to 93, 120 to 256, and 266 to 285; these read MSQQ…QEQK, LEQQ…AQVQ, and LPLIEQQHQKQEVHDPPEHQ. Polar residues predominate over residues 27 to 39; it reads IDTQQEQVKQPTS. 3 stretches are compositionally biased toward low complexity: residues 72-87, 120-129, and 137-147; these read EQQCEPQEQEQQQKQQ, LEQQQEQQES, and EQCLEQQQEQQ. Basic and acidic residues-rich tracts occupy residues 149–165, 175–185, and 200–233; these read SQEKELHLEQEQQKEEL, EQCEKHQEAKN, and QQKEQLEQEKKLVDQHLDQEPAQRTEQPEKKEEQ. The span at 235–248 shows a compositional bias: low complexity; sequence LEQQGQQEGQLEQP. Residues 272 to 285 are compositionally biased toward basic and acidic residues; it reads QHQKQEVHDPPEHQ.

The protein belongs to the involucrin family. As to quaternary structure, directly or indirectly cross-linked to cornifelin (CNFN). In terms of processing, substrate of transglutaminase. Specific glutamines or lysines are cross-linked to keratins, desmoplakin and to inter involucrin molecules. In terms of tissue distribution, keratinocytes of epidermis and other stratified squamous epithelia.

It localises to the cytoplasm. In terms of biological role, part of the insoluble cornified cell envelope (CE) of stratified squamous epithelia. This chain is Involucrin (IVL), found in Canis lupus familiaris (Dog).